Consider the following 391-residue polypeptide: Casein kinase II subunit alpha 3 (391 aa).

The Protein kinase domain occupies 39–324 (YQLVRKLGRG…AREAMEHPYF (286 aa)). ATP is bound by residues 45–53 (LGRGKYSEV) and lysine 68. Catalysis depends on aspartate 156, which acts as the Proton acceptor.

This sequence belongs to the protein kinase superfamily. Ser/Thr protein kinase family. CK2 subfamily. In terms of assembly, heterotetramer composed of two catalytic subunits (alpha chain and/or alpha' chain) and two regulatory subunits (beta chains). Interacts with PML. In terms of tissue distribution, detected in blood platelets and megakaryocyte cell lines. Poorly expressed in lung. Highly expressed in lung tumor tissues.

It catalyses the reaction L-seryl-[protein] + ATP = O-phospho-L-seryl-[protein] + ADP + H(+). The enzyme catalyses L-threonyl-[protein] + ATP = O-phospho-L-threonyl-[protein] + ADP + H(+). Probable catalytic subunit of a constitutively active serine/threonine-protein kinase complex that phosphorylates a large number of substrates containing acidic residues C-terminal to the phosphorylated serine or threonine. Amplification-dependent oncogene; promotes cell proliferation and tumorigenesis by down-regulating expression of the tumor suppressor protein, PML. May play a role in the pathogenesis of the lung cancer development and progression. This Homo sapiens (Human) protein is Casein kinase II subunit alpha 3 (CSNK2A3).